A 361-amino-acid polypeptide reads, in one-letter code: tRNA/tmRNA (uracil-C(5))-methyltransferase (361 aa).

The S-adenosyl-L-methionine site is built by Gln183, Tyr211, Asn216, Glu232, and Asp294. Residue Cys319 is the Nucleophile of the active site. The active-site Proton acceptor is Glu353.

It belongs to the class I-like SAM-binding methyltransferase superfamily. RNA M5U methyltransferase family. TrmA subfamily.

The enzyme catalyses uridine(54) in tRNA + S-adenosyl-L-methionine = 5-methyluridine(54) in tRNA + S-adenosyl-L-homocysteine + H(+). It catalyses the reaction uridine(341) in tmRNA + S-adenosyl-L-methionine = 5-methyluridine(341) in tmRNA + S-adenosyl-L-homocysteine + H(+). In terms of biological role, dual-specificity methyltransferase that catalyzes the formation of 5-methyluridine at position 54 (m5U54) in all tRNAs, and that of position 341 (m5U341) in tmRNA (transfer-mRNA). The polypeptide is tRNA/tmRNA (uracil-C(5))-methyltransferase (Acinetobacter baumannii (strain ACICU)).